The primary structure comprises 150 residues: D-aminoacyl-tRNA deacylase (150 aa).

Positions 138–139 (GP) match the Gly-cisPro motif, important for rejection of L-amino acids motif.

It belongs to the DTD family. As to quaternary structure, homodimer.

It is found in the cytoplasm. It catalyses the reaction glycyl-tRNA(Ala) + H2O = tRNA(Ala) + glycine + H(+). The catalysed reaction is a D-aminoacyl-tRNA + H2O = a tRNA + a D-alpha-amino acid + H(+). Functionally, an aminoacyl-tRNA editing enzyme that deacylates mischarged D-aminoacyl-tRNAs. Also deacylates mischarged glycyl-tRNA(Ala), protecting cells against glycine mischarging by AlaRS. Acts via tRNA-based rather than protein-based catalysis; rejects L-amino acids rather than detecting D-amino acids in the active site. By recycling D-aminoacyl-tRNA to D-amino acids and free tRNA molecules, this enzyme counteracts the toxicity associated with the formation of D-aminoacyl-tRNA entities in vivo and helps enforce protein L-homochirality. The protein is D-aminoacyl-tRNA deacylase of Salinibacter ruber (strain DSM 13855 / M31).